The following is a 459-amino-acid chain: Cysteine--tRNA ligase (459 aa).

Cys28 provides a ligand contact to Zn(2+). The 'HIGH' region signature appears at Val30 to His40. Positions 209, 234, and 238 each coordinate Zn(2+). Residues Lys266–Ser270 carry the 'KMSKS' region motif. Lys269 contributes to the ATP binding site.

Belongs to the class-I aminoacyl-tRNA synthetase family. As to quaternary structure, monomer. Requires Zn(2+) as cofactor.

It localises to the cytoplasm. The enzyme catalyses tRNA(Cys) + L-cysteine + ATP = L-cysteinyl-tRNA(Cys) + AMP + diphosphate. The sequence is that of Cysteine--tRNA ligase from Shewanella loihica (strain ATCC BAA-1088 / PV-4).